Here is a 2242-residue protein sequence, read N- to C-terminus: DEP domain-containing protein DDB_G0279099 (2242 aa).

Disordered stretches follow at residues 388–465, 576–644, 701–730, 871–965, 1077–1194, 1287–1336, 1384–1414, 1446–1471, and 1502–1521; these read SQNT…SNNS, DSNA…YSRV, PILRNGGTINNNNNNQQNHPISPSNSFDQK, DPTT…TKKS, QLQL…AFNS, GSQQ…MNGS, SELLPSSSGASSSSSNTLSSSNSGENNALPE, AQSSLLNSSTNNANSNNSSNSTNTSG, and SNNNTYTNNNNNNNSINSLN. Residues 392 to 440 adopt a coiled-coil conformation; the sequence is IQNNNNNNNNNNNNNNNNNNNNNNNNNNNNNNNNNNNNNSNNNKNNQNN. Residues 581 to 614 show a composition bias toward low complexity; it reads GGNNNNNYNNNNGNGNGHNHNNHNNNNNNNNNND. Residues 622-631 show a composition bias toward acidic residues; the sequence is EPSDFSDTED. Polar residues-rich tracts occupy residues 632-642 and 719-729; these read NSSTTPNSQYS and HPISPSNSFDQ. Low complexity predominate over residues 872 to 955; that stretch reads PTTTTTTGGT…PNSSNTVPNS (84 aa). Residues 1066–1101 are a coiled coil; that stretch reads IPTVENNQHQQQLQLEQQEKEKEKARLAALEKKKPF. Over residues 1082 to 1106 the composition is skewed to basic and acidic residues; the sequence is QQEKEKEKARLAALEKKKPFPREDS. 2 stretches are compositionally biased toward low complexity: residues 1108–1182 and 1287–1299; these read STLI…ATTA and GSQQQQQLIGSQS. A compositionally biased stretch (polar residues) spans 1300-1311; sequence APTSPLTPHKNI. Low complexity-rich tracts occupy residues 1312–1336, 1384–1410, and 1446–1470; these read NTNNNNNNNTTTNTTNNNNSVMNGS, SELLPSSSGASSSSSNTLSSSNSGENN, and AQSSLLNSSTNNANSNNSSNSTNTS. The region spanning 1556 to 1629 is the DEP domain; it reads IGIKMTERKY…DGQFYYRLKE (74 aa). A compositionally biased stretch (low complexity) spans 1645–1668; it reads TNNNFNNNNTNSNNNQQQQQQQQS. Disordered stretches follow at residues 1645–1763, 1803–1910, 2122–2145, and 2165–2218; these read TNNN…SMSN, DEAN…QQQQ, NYNNNNNNNNNNNGGGNGNPNLLK, and NSDT…KNEM. Residues 1669-1702 are compositionally biased toward polar residues; it reads IPSVTSSAVNSPNKDSNTPDHSPISSPKQIGNKL. Low complexity-rich tracts occupy residues 1703–1760 and 1807–1848; these read SSSS…IQSS and GDNN…SSNS. The stretch at 1791–1821 forms a coiled coil; that stretch reads LTNKEKDKEKEIDEANGDNNNNNNNNNNNNN. Composition is skewed to polar residues over residues 1849–1871 and 1879–1889; these read GQGSLNSTLSSIPPATTPNTNPL and YGSSVQNSNQH. 2 stretches are compositionally biased toward low complexity: residues 1890-1910 and 2122-2133; these read QQQQPQQPQQQQQQQQQQQQQ and NYNNNNNNNNNN. Composition is skewed to basic and acidic residues over residues 2166-2181 and 2192-2218; these read SDTEEKNNESDSDNNH and DTDHLSESHEGSHKNESDKEGRDKNEM.

This sequence in the N-terminal section; belongs to the IML1 family.

This is DEP domain-containing protein DDB_G0279099 from Dictyostelium discoideum (Social amoeba).